Here is a 2556-residue protein sequence, read N- to C-terminus: Non-reducing polyketide synthase tazA (2556 aa).

The tract at residues 16 to 270 (LFGPQALSFT…QAIGLRGRFH (255 aa)) is N-terminal acylcarrier protein transacylase domain (SAT). Residue Cys143 is the Nucleophile; for transacylase activity of the active site. The Proton donor/acceptor; for transacylase activity role is filled by His270. The region spanning 397-769 (EDEIAVIGMA…GSNASMIVTQ (373 aa)) is the Ketosynthase family 3 (KS3) domain. Residues 876 to 1209 (CFGGQISRFV…WAHHCTQAPA (334 aa)) are malonyl-CoA:ACP transacylase (MAT) domain. An N-terminal hotdog fold region spans residues 1254–1383 (YTFVGYQDEG…GQIIFQSAAE (130 aa)). A PKS/mFAS DH domain is found at 1254 to 1560 (YTFVGYQDEG…YSRLPKSTMS (307 aa)). Residues 1257-1564 (VGYQDEGKRQ…PKSTMSKMLT (308 aa)) form a product template (PT) domain region. The active-site Proton acceptor; for dehydratase activity is His1285. The C-terminal hotdog fold stretch occupies residues 1408 to 1560 (DPDDVLQGRN…YSRLPKSTMS (153 aa)). Asp1465 acts as the Proton donor; for dehydratase activity in catalysis. The segment at 1567–1621 (TAPSERRAQVDSPSMPASINAPPSASEQAPVEPAPQTKESAPIAEPGAGGQSNSK) is disordered. A compositionally biased stretch (polar residues) spans 1577-1593 (DSPSMPASINAPPSASE). Residues 1620–1694 (SKVPGIVVEV…DVVQCVHKTL (75 aa)) enclose the Carrier domain. Ser1654 carries the post-translational modification O-(pantetheine 4'-phosphoryl)serine. The interval 1700 to 1731 (SAAQESEGNLTPASSGTQSPRSDPVSDTSLSD) is disordered. The segment covering 1702-1731 (AQESEGNLTPASSGTQSPRSDPVSDTSLSD) has biased composition (polar residues). The segment at 1830–2107 (LEHEGRLIDI…DWTDGHLAEN (278 aa)) is methyltransferase domain. Residues 2180–2424 (VTGATGSLGA…WTPVDVVAST (245 aa)) are NADPH-binding (R) domain.

Pantetheine 4'-phosphate serves as cofactor.

The protein operates within secondary metabolite biosynthesis. Functionally, non-reducing polyketide synthase; part of the gene cluster that mediates the biosynthesis of azaterrilone A and other azaphilones, a class of fungal metabolites characterized by a highly oxygenated pyrano-quinone bicyclic core and exhibiting a broad range of bioactivities. The first step of the pathway begins with tazA that assembles one acetyl-CoA starter unit, five malonyl-CoA units, and catalyzes a series of Claisen condensations, methylation, PT-mediated cyclization, and finally releases the first hexaketide precursor through the R-domain. The tazA product then undergoes reduction on its terminal ketone and the following pyran-ring formation by yet undetermined enzyme(s). Dehydration and enoyl reduction, possibly involving the trans-enoyl reductase tazE leads to the next intermediate. TazD is predicted as an acetyltransferase and might catalyze the acetylation steps leading to the synthesis of azaterrilone A. Azaterrilone A is not the final product of the taz pathway and both the highly reducing polyketide synthase tazB and the dual enzyme tazHJ catalyze late steps of the pathway, leading to the production of the 2 final stereoisomers that contain additional polyketide modification whose structures have still to be determined. This Aspergillus terreus (strain NIH 2624 / FGSC A1156) protein is Non-reducing polyketide synthase tazA.